The chain runs to 457 residues: Squalene epoxidase erg1 (457 aa).

Residues 15-16, 35-36, Arg43, Arg114, Val130, Asp293, and Met306 contribute to the FAD site; these read IT and ER. 3 helical membrane-spanning segments follow: residues 347-364, 409-429, and 433-453; these read GYSF…KLFT, FYAV…ALLM, and IIES…YILS.

This sequence belongs to the squalene monooxygenase family. FAD serves as cofactor.

The protein localises to the microsome membrane. It is found in the endoplasmic reticulum membrane. It localises to the vacuole membrane. The catalysed reaction is squalene + reduced [NADPH--hemoprotein reductase] + O2 = (S)-2,3-epoxysqualene + oxidized [NADPH--hemoprotein reductase] + H2O + H(+). It functions in the pathway terpene metabolism; lanosterol biosynthesis; lanosterol from farnesyl diphosphate: step 2/3. Its pathway is steroid metabolism; ergosterol biosynthesis. With respect to regulation, activity is blocked by the allylamine class antifungal terbinafine. Squalene epoxidase; part of the third module of ergosterol biosynthesis pathway that includes by the late steps of the pathway. Erg1 catalyzes the epoxidation of squalene into 2,3-epoxysqualene. The third module or late pathway involves the ergosterol synthesis itself through consecutive reactions that mainly occur in the endoplasmic reticulum (ER) membrane. Firstly, the squalene synthase erg9 catalyzes the condensation of 2 farnesyl pyrophosphate moieties to form squalene, which is the precursor of all steroids. Secondly, squalene is converted into lanosterol by the consecutive action of the squalene epoxidase erg1 and the lanosterol synthase erg7. The lanosterol 14-alpha-demethylase erg11/cyp1 catalyzes C14-demethylation of lanosterol to produce 4,4'-dimethyl cholesta-8,14,24-triene-3-beta-ol. In the next steps, a complex process involving various demethylation, reduction and desaturation reactions catalyzed by the C-14 reductase erg24 and the C-4 demethylation complex erg25-erg26-erg27 leads to the production of zymosterol. Erg28 likely functions in the C-4 demethylation complex reaction by tethering erg26 and Erg27 to the endoplasmic reticulum or to facilitate interaction between these proteins. Then, the sterol 24-C-methyltransferase erg6 catalyzes the methyl transfer from S-adenosyl-methionine to the C-24 of zymosterol to form fecosterol. The C-8 sterol isomerase erg2 catalyzes the reaction which results in unsaturation at C-7 in the B ring of sterols and thus converts fecosterol to episterol. The sterol-C5-desaturases erg31 and erg32 then catalyze the introduction of a C-5 double bond in the B ring to produce 5-dehydroepisterol. The C-22 sterol desaturase erg5 further converts 5-dehydroepisterol into ergosta-5,7,22,24(28)-tetraen-3beta-ol by forming the C-22(23) double bond in the sterol side chain. Finally, ergosta-5,7,22,24(28)-tetraen-3beta-ol is substrate of the C-24(28) sterol reductase erg4 to produce ergosterol. In the genus Schizosaccharomyces, a second route exists between lanosterol and fecosterol, via the methylation of lanosterol to eburicol by erg6, followed by C14-demethylation by erg11/cyp1 and C4-demethylation by the demethylation complex erg25-erg26-erg27. The chain is Squalene epoxidase erg1 from Schizosaccharomyces pombe (strain 972 / ATCC 24843) (Fission yeast).